A 309-amino-acid polypeptide reads, in one-letter code: DDRGK domain-containing protein 1 (309 aa).

Residues 1-2 (MD) lie on the Lumenal side of the membrane. The helical transmembrane segment at 3 to 23 (LIILVGIASALLVVILTIFFL) threads the bilayer. At 24-309 (QKKKGGTEAK…VSAGAGEGSS (286 aa)) the chain is on the cytoplasmic side. The tract at residues 30-178 (TEAKEAAAPP…RLVKEERERK (149 aa)) is disordered. Low complexity predominate over residues 53 to 84 (RRAQIARNQRNRLRQNAPAAAPAAAAALQAAD). Residues 85-95 (AEGDNDDENPD) are compositionally biased toward acidic residues. Residues 107–178 (LDEKMGAKKR…RLVKEERERK (72 aa)) are compositionally biased toward basic and acidic residues.

It belongs to the DDRGK1 family. Interacts with Atg9; the interaction is transient.

It localises to the endoplasmic reticulum membrane. Functionally, substrate adapter for ufmylation, the covalent attachment of the ubiquitin-like modifier UFM1 to substrate proteins. Required for ufmylation of Atg9; protects the nervous system during aging, possibly by stabilizing Atg9 and supporting its function. This is DDRGK domain-containing protein 1 from Drosophila persimilis (Fruit fly).